A 667-amino-acid polypeptide reads, in one-letter code: DNA ligase (667 aa).

NAD(+) contacts are provided by residues 30 to 34 (DSEYD), 79 to 80 (SL), and Glu112. Residue Lys114 is the N6-AMP-lysine intermediate of the active site. Residues Arg135, Glu172, Lys289, and Lys313 each coordinate NAD(+). 4 residues coordinate Zn(2+): Cys407, Cys410, Cys425, and Cys431. Residues 590–667 (VRDNPLKGKT…SENEFLALLA (78 aa)) enclose the BRCT domain.

Belongs to the NAD-dependent DNA ligase family. LigA subfamily. Requires Mg(2+) as cofactor. Mn(2+) serves as cofactor.

The enzyme catalyses NAD(+) + (deoxyribonucleotide)n-3'-hydroxyl + 5'-phospho-(deoxyribonucleotide)m = (deoxyribonucleotide)n+m + AMP + beta-nicotinamide D-nucleotide.. DNA ligase that catalyzes the formation of phosphodiester linkages between 5'-phosphoryl and 3'-hydroxyl groups in double-stranded DNA using NAD as a coenzyme and as the energy source for the reaction. It is essential for DNA replication and repair of damaged DNA. The protein is DNA ligase of Histophilus somni (strain 2336) (Haemophilus somnus).